The following is a 95-amino-acid chain: Orphan antitoxin ParD2 (95 aa).

In terms of biological role, antitoxin component of a non-functional type II toxin-antitoxin (TA system). Does not neutralize the effect of any of the RelE or ParE toxins. This is Orphan antitoxin ParD2 (parD2) from Caulobacter vibrioides (strain ATCC 19089 / CIP 103742 / CB 15) (Caulobacter crescentus).